The primary structure comprises 435 residues: Endoglucanase EG-1 (435 aa).

Positions 1–20 (MARGTALLGLTSLLLGLVNG) are cleaved as a signal peptide. Gln21 is subject to Pyrrolidone carboxylic acid. 3 disulfides stabilise this stretch: Cys38-Cys44, Cys71-Cys93, and Cys83-Cys89. Asn109 carries N-linked (GlcNAc...) asparagine glycosylation. Cystine bridges form between Cys160–Cys385, Cys192–Cys215, Cys196–Cys214, Cys235–Cys254, Cys243–Cys248, and Cys259–Cys335. The active-site Nucleophile is Glu217. Catalysis depends on Glu222, which acts as the Proton donor. An N-linked (GlcNAc...) asparagine glycan is attached at Asn267.

It belongs to the glycosyl hydrolase 7 (cellulase C) family.

Its subcellular location is the secreted. It catalyses the reaction Endohydrolysis of (1-&gt;4)-beta-D-glucosidic linkages in cellulose, lichenin and cereal beta-D-glucans.. The biological conversion of cellulose to glucose generally requires three types of hydrolytic enzymes: (1) Endoglucanases which cut internal beta-1,4-glucosidic bonds; (2) Exocellobiohydrolases that cut the disaccharide cellobiose from the non-reducing end of the cellulose polymer chain; (3) Beta-1,4-glucosidases which hydrolyze the cellobiose and other short cello-oligosaccharides to glucose. This chain is Endoglucanase EG-1 (EG-1), found in Humicola insolens (Soft-rot fungus).